Consider the following 129-residue polypeptide: Fluoride-specific ion channel FluC (129 aa).

4 helical membrane passes run 5-25, 32-52, 60-80, and 99-119; these read LTIALFCAGGGLARYYLSGWV, AFPFGTLAVNLIGAYCIGLIM, LIPATLRLGLTVGFMGGLTTF, and AMVNALASVVMCLLCTWLGVI. Residues G75 and T78 each coordinate Na(+).

The protein belongs to the fluoride channel Fluc/FEX (TC 1.A.43) family.

Its subcellular location is the cell inner membrane. The enzyme catalyses fluoride(in) = fluoride(out). Its activity is regulated as follows. Na(+) is not transported, but it plays an essential structural role and its presence is essential for fluoride channel function. In terms of biological role, fluoride-specific ion channel. Important for reducing fluoride concentration in the cell, thus reducing its toxicity. The polypeptide is Fluoride-specific ion channel FluC (Pelobacter propionicus (strain DSM 2379 / NBRC 103807 / OttBd1)).